Here is a 360-residue protein sequence, read N- to C-terminus: Histidinol-phosphate aminotransferase (360 aa).

An N6-(pyridoxal phosphate)lysine modification is found at lysine 211.

It belongs to the class-II pyridoxal-phosphate-dependent aminotransferase family. Histidinol-phosphate aminotransferase subfamily. As to quaternary structure, homodimer. The cofactor is pyridoxal 5'-phosphate.

It catalyses the reaction L-histidinol phosphate + 2-oxoglutarate = 3-(imidazol-4-yl)-2-oxopropyl phosphate + L-glutamate. Its pathway is amino-acid biosynthesis; L-histidine biosynthesis; L-histidine from 5-phospho-alpha-D-ribose 1-diphosphate: step 7/9. This chain is Histidinol-phosphate aminotransferase, found in Cronobacter sakazakii (strain ATCC BAA-894) (Enterobacter sakazakii).